The following is a 500-amino-acid chain: MSTQEEMEERLLREGSDAEGQSNNRESIYLRTKVWSEVNKMWRIALPSSLFRMTSFGSIIVAQAFIGHSSELGLAAYALLQSTFIRFLYGLMGGMSSATETLCGQAYGAEQYHTMGIYLQRSWIVDMAVTTLFLPFIVLAGPILRLLGQNVEITKTVDEIYPWMIPYVYSLIFTMTIQMYLQAQMRNAIVGVLSTLSLALDLVVTWWCVSVMGMGIGGALLGLNVGSWAMVLAEFVYIFGGWCPFTWTGFSIAAFVDLIPMLKLSISSGFMICLEYWYMSILVLMAGYTKDAKIAISAFSICQYIYTWELNICLGFLGAACVRVANELGKGDAHAVRFSIKVILTISTLMGVIFSALCLAFCGRISYLFSNSDEVSDAVNDLSVILAVSILLNSIQPILSGVAVGAGMQSIVAVVNLASYYAIGIPLGLILTYVFHLGVKGLWSGMLAGIAIQTIILCYIIYKTDWELEVKRTCERMKVWSLKPSNEESNPIIREESRSK.

The disordered stretch occupies residues 1 to 20; it reads MSTQEEMEERLLREGSDAEG. 12 consecutive transmembrane segments (helical) span residues 48–67, 72–92, 124–144, 160–180, 188–208, 225–245, 266–286, 298–318, 342–362, 384–404, 411–431, and 441–461; these read SSLF…AFIG, LGLA…YGLM, IVDM…GPIL, IYPW…IQMY, AIVG…TWWC, VGSW…WCPF, ISSG…VLMA, AFSI…GFLG, VILT…LAFC, VILA…GVAV, IVAV…GLIL, and GLWS…CYII.

It belongs to the multi antimicrobial extrusion (MATE) (TC 2.A.66.1) family.

The protein localises to the membrane. This is Protein DETOXIFICATION 24 from Arabidopsis thaliana (Mouse-ear cress).